We begin with the raw amino-acid sequence, 404 residues long: CD209 antigen (404 aa).

The Cytoplasmic portion of the chain corresponds to 1 to 37 (MSDSKEPRLQQLGLLEEEQLRGLGFRQTRGYKSLAGC). 3 consecutive short sequence motifs (endocytosis signal) follow at residues 14-15 (LL), 16-18 (EEE), and 31-34 (YKSL). The helical; Signal-anchor for type II membrane protein transmembrane segment at 38 to 58 (LGHGPLVLQLLSFTLLAGLLV) threads the bilayer. Over 59 to 404 (QVSKVPSSIS…APATPNPPPA (346 aa)) the chain is Extracellular. The N-linked (GlcNAc...) asparagine glycan is linked to asparagine 80. 7 repeat units span residues 96-118 (KLQE…PEKS), 119-141 (KLQE…PEKS), 142-164 (KLQE…PEKS), 165-187 (KMQE…PEKS), 188-210 (KQQE…PEKS), 211-233 (KQQE…PEKS), and 234-257 (KQQE…HPCP). Residues 96-257 (KLQEIYQELT…AVERLCHPCP (162 aa)) form a 7 X approximate tandem repeats region. Disulfide bonds link cysteine 256–cysteine 267, cysteine 284–cysteine 377, and cysteine 356–cysteine 369. The 116-residue stretch at 263–378 (FQGNCYFMSN…CNLAKFWICK (116 aa)) folds into the C-type lectin domain. Residues glutamate 347, asparagine 349, valine 351, glutamate 354, asparagine 365, and aspartate 366 each contribute to the Ca(2+) site.

In terms of assembly, homotetramer. Interacts with C1QBP; the interaction is indicative for a C1q:C1QBP:CD209 signaling complex. Interacts with ICAM2 and ICAM3 by binding to mannose-like carbohydrates. Interacts (via C-type lectin domain) with CEACAM1 (via Lewis X moieties); this interaction is regulated by the glycosylation pattern of CEACAM1 on cell types and regulates contact between dendritic cells and neutrophils. (Microbial infection) Interacts with HIV-1 and HIV-2 gp120. As to quaternary structure, (Microbial infection) Interacts with ebolavirus envelope glycoproteins. In terms of assembly, (Microbial infection) Interacts with cytomegalovirus gB protein. (Microbial infection) Interacts with HCV E2 protein. As to quaternary structure, (Microbial infection) Interacts with dengue virus major envelope protein E. In terms of assembly, (Microbial infection) Interacts with measles hemagglutinin. (Microbial infection) Interacts with herpes simplex virus 1 surface proteins. As to quaternary structure, (Microbial infection) Interacts with Influenzavirus A hemagglutinin. In terms of assembly, (Microbial infection) Interacts with SARS-CoV spike glycoprotein. (Microbial infection) Interacts with Japanese encephalitis virus E protein. As to quaternary structure, (Microbial infection) Interacts with Lassa virus Glycoprotein. In terms of assembly, (Microbial infection) Interacts with marburg virus glycoprotein. (Microbial infection) Interacts with Respiratory syncytial virus glycoprotein G. As to quaternary structure, (Microbial infection) Interacts with Rift valley fever virus and uukuniemi virus envelope glycoprotein. In terms of assembly, (Microbial infection) Interacts with west-nile virus envelope glycoprotein. (Microbial infection) Interacts with whole M.bovis cells in a Ca(2+)-dependent and independent manner; in vitro experiments suggest it interacts with CH60.1 (groL1), DnaK, GADPH (gap) and LrpG. In terms of tissue distribution, predominantly expressed in dendritic cells and in DC-residing tissues. Also found in placental macrophages, endothelial cells of placental vascular channels, peripheral blood mononuclear cells, and THP-1 monocytes.

The protein resides in the cell membrane. The protein localises to the secreted. Pathogen-recognition receptor expressed on the surface of immature dendritic cells (DCs) and involved in initiation of primary immune response. Thought to mediate the endocytosis of pathogens which are subsequently degraded in lysosomal compartments. The receptor returns to the cell membrane surface and the pathogen-derived antigens are presented to resting T-cells via MHC class II proteins to initiate the adaptive immune response. Functionally, on DCs it is a high affinity receptor for ICAM2 and ICAM3 by binding to mannose-like carbohydrates. May act as a DC rolling receptor that mediates transendothelial migration of DC presursors from blood to tissues by binding endothelial ICAM2. Seems to regulate DC-induced T-cell proliferation by binding to ICAM3 on T-cells in the immunological synapse formed between DC and T-cells. Its function is as follows. (Microbial infection) Acts as an attachment receptor for HIV-1 and HIV-2. In terms of biological role, (Microbial infection) Acts as an attachment receptor for Ebolavirus. (Microbial infection) Acts as an attachment receptor for Cytomegalovirus. Functionally, (Microbial infection) Acts as an attachment receptor for HCV. Its function is as follows. (Microbial infection) Acts as an attachment receptor for Dengue virus. In terms of biological role, (Microbial infection) Acts as an attachment receptor for Measles virus. (Microbial infection) Acts as an attachment receptor for Herpes simplex virus 1. Functionally, (Microbial infection) Acts as an attachment receptor for Influenzavirus A. Its function is as follows. (Microbial infection) Acts as an attachment receptor for SARS-CoV. In terms of biological role, (Microbial infection) Acts as an attachment receptor for Japanese encephalitis virus. (Microbial infection) Acts as an attachment receptor for Lassa virus. Acts as an attachment receptor for Marburg virusn. Functionally, (Microbial infection) Acts as an attachment receptor for Respiratory syncytial virus. Its function is as follows. (Microbial infection) Acts as an attachment receptor for Rift valley fever virus and uukuniemi virus. In terms of biological role, (Microbial infection) Acts as an attachment receptor for West-nile virus. (Microbial infection) Probably recognizes in a calcium-dependent manner high mannose N-linked oligosaccharides in a variety of bacterial pathogen antigens, including Leishmania pifanoi LPG, Lewis-x antigen in Helicobacter pylori LPS, mannose in Klebsiella pneumonae LPS, di-mannose and tri-mannose in Mycobacterium tuberculosis ManLAM and Lewis-x antigen in Schistosoma mansoni SEA. Recognition of M.tuberculosis by dendritic cells occurs partially via this molecule. This is CD209 antigen (CD209) from Homo sapiens (Human).